Consider the following 437-residue polypeptide: Phenylacetate-coenzyme A ligase (437 aa).

Belongs to the phenylacetyl-CoA ligase family. In terms of assembly, monomer.

The catalysed reaction is 2-phenylacetate + ATP + CoA = phenylacetyl-CoA + AMP + diphosphate. The protein operates within aromatic compound metabolism; phenylacetate degradation. Catalyzes the activation of phenylacetic acid (PA) to phenylacetyl-CoA (PA-CoA). The protein is Phenylacetate-coenzyme A ligase (paaK) of Escherichia coli (strain K12).